Consider the following 349-residue polypeptide: Probable formaldehyde dehydrogenase AdhA (349 aa).

The Zn(2+) site is built by Cys-44, His-66, Cys-97, Cys-100, Cys-103, Cys-111, and Cys-161.

This sequence belongs to the zinc-containing alcohol dehydrogenase family. The cofactor is Zn(2+).

Functions in the protection against aldehyde-stress. This is Probable formaldehyde dehydrogenase AdhA (adhA) from Bacillus subtilis (strain 168).